The primary structure comprises 447 residues: Multicopper oxidase mco (447 aa).

Over residues M1–K25 the composition is skewed to basic and acidic residues. Positions M1–S29 are disordered. 12 residues coordinate Cu cation: H107, H109, H147, H149, H375, H378, H380, H428, C429, H430, H434, and M439.

Belongs to the multicopper oxidase family. Cu cation is required as a cofactor.

It localises to the cytoplasm. May be involved in copper homeostasis and oxidative stress response. This Staphylococcus haemolyticus (strain JCSC1435) protein is Multicopper oxidase mco (mco).